A 364-amino-acid chain; its full sequence is Methylthioribose-1-phosphate isomerase (364 aa).

Substrate is bound by residues 49–51 (RGA), Arg89, and Gln201. The active-site Proton donor is Asp242. A substrate-binding site is contributed by 252–253 (NK).

The protein belongs to the eIF-2B alpha/beta/delta subunits family. MtnA subfamily.

The catalysed reaction is 5-(methylsulfanyl)-alpha-D-ribose 1-phosphate = 5-(methylsulfanyl)-D-ribulose 1-phosphate. It participates in amino-acid biosynthesis; L-methionine biosynthesis via salvage pathway; L-methionine from S-methyl-5-thio-alpha-D-ribose 1-phosphate: step 1/6. Catalyzes the interconversion of methylthioribose-1-phosphate (MTR-1-P) into methylthioribulose-1-phosphate (MTRu-1-P). The sequence is that of Methylthioribose-1-phosphate isomerase from Leptospira interrogans serogroup Icterohaemorrhagiae serovar Lai (strain 56601).